Here is a 393-residue protein sequence, read N- to C-terminus: Na(+)/H(+) antiporter NhaA (393 aa).

12 helical membrane-spanning segments follow: residues 23–43, 58–78, 96–116, 126–146, 155–175, 178–198, 201–221, 224–244, 265–285, 298–318, 334–354, and 367–387; these read AGGITLMAAAALALIVANSPF, LSLAHWINDALMAKFFLLVGL, MLPGIAAAGGVILPAIIFAVL, GWAVPSATDIAFALGVLSLLG, VFLATLAILDDLAAVVIIAIF, AEISMPYLGAAFITAAVLFVM, MGVVKLLPYLISAVILWFFVF, GVHATVAGVVAALMIPLKPAP, VAFIVVPIFGFANAGISFKGL, ILLGLFLGKQFGVFGAAWLAI, LYGVAILCGIGFTMSIFIGLL, and IGVLSGSALSAICGYLLLRAA.

Belongs to the NhaA Na(+)/H(+) (TC 2.A.33) antiporter family.

It is found in the cell inner membrane. It catalyses the reaction Na(+)(in) + 2 H(+)(out) = Na(+)(out) + 2 H(+)(in). Na(+)/H(+) antiporter that extrudes sodium in exchange for external protons. This Brucella suis (strain ATCC 23445 / NCTC 10510) protein is Na(+)/H(+) antiporter NhaA.